Reading from the N-terminus, the 547-residue chain is Putative cysteine ligase BshC (547 aa).

Residues 461 to 504 (ASTEATRSAIMDEMEALKQKVVRAEKRQQDEVRAQLKKAHTNLR) adopt a coiled-coil conformation.

It belongs to the BshC family.

This Salinibacter ruber (strain DSM 13855 / M31) protein is Putative cysteine ligase BshC.